The primary structure comprises 90 residues: Small ribosomal subunit protein bS20 (90 aa).

Polar residues predominate over residues 1–10 (MANHKSTQKS). Positions 1–25 (MANHKSTQKSIRQDQKRNLINKSRK) are disordered.

This sequence belongs to the bacterial ribosomal protein bS20 family.

Its function is as follows. Binds directly to 16S ribosomal RNA. The protein is Small ribosomal subunit protein bS20 of Orientia tsutsugamushi (strain Ikeda) (Rickettsia tsutsugamushi).